A 234-amino-acid polypeptide reads, in one-letter code: Uridylate kinase (234 aa).

9–10 (GS) provides a ligand contact to ATP. A UMP-binding site is contributed by glycine 43. Residues glycine 44 and arginine 48 each coordinate ATP. UMP contacts are provided by residues aspartate 65 and 113 to 119 (VIPGQTT). ATP contacts are provided by threonine 139, tyrosine 145, and aspartate 148.

This sequence belongs to the UMP kinase family. In terms of assembly, homohexamer.

It localises to the cytoplasm. The enzyme catalyses UMP + ATP = UDP + ADP. The protein operates within pyrimidine metabolism; CTP biosynthesis via de novo pathway; UDP from UMP (UMPK route): step 1/1. Its activity is regulated as follows. Inhibited by UTP. Its function is as follows. Catalyzes the reversible phosphorylation of UMP to UDP. The protein is Uridylate kinase of Methanococcoides burtonii (strain DSM 6242 / NBRC 107633 / OCM 468 / ACE-M).